The primary structure comprises 497 residues: Glutamyl-tRNA(Gln) amidotransferase subunit A (497 aa).

Residues Lys75 and Ser150 each act as charge relay system in the active site. The Acyl-ester intermediate role is filled by Ser174.

This sequence belongs to the amidase family. GatA subfamily. Heterotrimer of A, B and C subunits.

The catalysed reaction is L-glutamyl-tRNA(Gln) + L-glutamine + ATP + H2O = L-glutaminyl-tRNA(Gln) + L-glutamate + ADP + phosphate + H(+). Allows the formation of correctly charged Gln-tRNA(Gln) through the transamidation of misacylated Glu-tRNA(Gln) in organisms which lack glutaminyl-tRNA synthetase. The reaction takes place in the presence of glutamine and ATP through an activated gamma-phospho-Glu-tRNA(Gln). The polypeptide is Glutamyl-tRNA(Gln) amidotransferase subunit A (Paraburkholderia phymatum (strain DSM 17167 / CIP 108236 / LMG 21445 / STM815) (Burkholderia phymatum)).